Consider the following 119-residue polypeptide: Beta-2-microglobulin (119 aa).

The first 20 residues, 1–20 (MSPSVALAVLALLSLSGLEA), serve as a signal peptide directing secretion. The Ig-like C1-type domain occupies 25-114 (PKIQVYSRHP…VTLSGPRTVK (90 aa)). C45 and C100 are oxidised to a cystine.

Belongs to the beta-2-microglobulin family. Heterodimer of an alpha chain and a beta chain. Beta-2-microglobulin is the beta-chain of major histocompatibility complex class I molecules.

The protein resides in the secreted. In terms of biological role, component of the class I major histocompatibility complex (MHC). Involved in the presentation of peptide antigens to the immune system. The sequence is that of Beta-2-microglobulin (B2M) from Macaca fascicularis (Crab-eating macaque).